A 467-amino-acid chain; its full sequence is MRCTSFSSFSLSLEDALHLLQRFLYSSNQIKQIHTVLLTSNALVASRWKTKCVYNTLIRSYLTTGEYKTSLALFTHMLASHVQPNNLTFPSLIKAACSSFSVSYGVALHGQALKRGFLWDPFVQTSFVRFYGEVGDLESSRKMFDDILNPCVVACNSLLDACGRNGEMDYAFEYFQRMPVTDVVSWTTVINGFSKKGLHAKALMVFGEMIQNERAVITPNEATFVSVLSSCANFDQGGIRLGKQIHGYVMSKEIILTTTLGTALLDMYGKAGDLEMALTIFDQIRDKKVCAWNAIISALASNGRPKQALEMFEMMKSSYVHPNGITLLAILTACARSKLVDLGIQLFSSICSEYKIIPTSEHYGCVVDLIGRAGLLVDAANFIQSLPFEPDASVLGALLGACKIHENTELGNTVGKQLIGLQPQHCGQYVALSTFNALDSNWSEAEKMRKAMIEAGIRKIPAYSVLT.

10 PPR repeats span residues 50–84 (TKCV…HVQP), 85–119 (NNLT…GFLW), 120–150 (DPFV…ILNP), 151–181 (CVVA…MPVT), 182–216 (DVVS…ERAV), 220–256 (NEAT…EIIL), 257–287 (TTTL…IRDK), 288–322 (KVCA…YVHP), 323–358 (NGIT…KIIP), and 359–389 (TSEH…LPFE). Residues 394–467 (VLGALLGACK…RKIPAYSVLT (74 aa)) form a type E motif; degenerate region.

It belongs to the PPR family. PCMP-E subfamily.

This is Putative pentatricopeptide repeat-containing protein At1g10330 (PCMP-E71) from Arabidopsis thaliana (Mouse-ear cress).